The sequence spans 258 residues: Acyl-[acyl-carrier-protein]--UDP-N-acetylglucosamine O-acyltransferase (258 aa).

It belongs to the transferase hexapeptide repeat family. LpxA subfamily. Homotrimer.

The protein resides in the cytoplasm. It carries out the reaction a (3R)-hydroxyacyl-[ACP] + UDP-N-acetyl-alpha-D-glucosamine = a UDP-3-O-[(3R)-3-hydroxyacyl]-N-acetyl-alpha-D-glucosamine + holo-[ACP]. Its pathway is glycolipid biosynthesis; lipid IV(A) biosynthesis; lipid IV(A) from (3R)-3-hydroxytetradecanoyl-[acyl-carrier-protein] and UDP-N-acetyl-alpha-D-glucosamine: step 1/6. Functionally, involved in the biosynthesis of lipid A, a phosphorylated glycolipid that anchors the lipopolysaccharide to the outer membrane of the cell. The polypeptide is Acyl-[acyl-carrier-protein]--UDP-N-acetylglucosamine O-acyltransferase (Halorhodospira halophila (strain DSM 244 / SL1) (Ectothiorhodospira halophila (strain DSM 244 / SL1))).